The sequence spans 365 residues: Ribosomal RNA large subunit methyltransferase F (365 aa).

Residues 1 to 49 (MSKPAVKSVQSATAKTATRAVNIRQKVKAPKQAKPEAKGRVRPSKDKPR) form a disordered region. The segment covering 33–49 (AKPEAKGRVRPSKDKPR) has biased composition (basic and acidic residues).

Belongs to the methyltransferase superfamily. METTL16/RlmF family.

It localises to the cytoplasm. The catalysed reaction is adenosine(1618) in 23S rRNA + S-adenosyl-L-methionine = N(6)-methyladenosine(1618) in 23S rRNA + S-adenosyl-L-homocysteine + H(+). In terms of biological role, specifically methylates the adenine in position 1618 of 23S rRNA. The chain is Ribosomal RNA large subunit methyltransferase F from Shewanella baltica (strain OS185).